The following is a 345-amino-acid chain: Anthranilate phosphoribosyltransferase (345 aa).

Residues Gly-84, 87–88 (GD), Thr-92, 94–97 (NIST), 112–120 (KHGNRSVSS), and Ser-124 each bind 5-phospho-alpha-D-ribose 1-diphosphate. Residue Gly-84 coordinates anthranilate. Ser-96 contributes to the Mg(2+) binding site. Position 115 (Asn-115) interacts with anthranilate. Arg-170 provides a ligand contact to anthranilate. Asp-229 and Glu-230 together coordinate Mg(2+).

It belongs to the anthranilate phosphoribosyltransferase family. Homodimer. The cofactor is Mg(2+).

The catalysed reaction is N-(5-phospho-beta-D-ribosyl)anthranilate + diphosphate = 5-phospho-alpha-D-ribose 1-diphosphate + anthranilate. Its pathway is amino-acid biosynthesis; L-tryptophan biosynthesis; L-tryptophan from chorismate: step 2/5. Its function is as follows. Catalyzes the transfer of the phosphoribosyl group of 5-phosphorylribose-1-pyrophosphate (PRPP) to anthranilate to yield N-(5'-phosphoribosyl)-anthranilate (PRA). This is Anthranilate phosphoribosyltransferase from Xanthomonas campestris pv. campestris (strain 8004).